Here is a 473-residue protein sequence, read N- to C-terminus: Glutamate--tRNA ligase (473 aa).

Residues 11–21 (PSPTGFLHIGG) carry the 'HIGH' region motif. Positions 240–244 (KLSKR) match the 'KMSKS' region motif. Residue Lys243 coordinates ATP.

This sequence belongs to the class-I aminoacyl-tRNA synthetase family. Glutamate--tRNA ligase type 1 subfamily. Monomer.

It localises to the cytoplasm. It carries out the reaction tRNA(Glu) + L-glutamate + ATP = L-glutamyl-tRNA(Glu) + AMP + diphosphate. In terms of biological role, catalyzes the attachment of glutamate to tRNA(Glu) in a two-step reaction: glutamate is first activated by ATP to form Glu-AMP and then transferred to the acceptor end of tRNA(Glu). This chain is Glutamate--tRNA ligase, found in Rhodopseudomonas palustris (strain TIE-1).